Here is a 196-residue protein sequence, read N- to C-terminus: Imidazoleglycerol-phosphate dehydratase (196 aa).

Belongs to the imidazoleglycerol-phosphate dehydratase family.

The protein resides in the cytoplasm. The enzyme catalyses D-erythro-1-(imidazol-4-yl)glycerol 3-phosphate = 3-(imidazol-4-yl)-2-oxopropyl phosphate + H2O. The protein operates within amino-acid biosynthesis; L-histidine biosynthesis; L-histidine from 5-phospho-alpha-D-ribose 1-diphosphate: step 6/9. The polypeptide is Imidazoleglycerol-phosphate dehydratase (Clostridium botulinum (strain ATCC 19397 / Type A)).